Here is a 91-residue protein sequence, read N- to C-terminus: Putative membrane protein insertion efficiency factor (91 aa).

Belongs to the UPF0161 family.

The protein localises to the cell inner membrane. Its function is as follows. Could be involved in insertion of integral membrane proteins into the membrane. This chain is Putative membrane protein insertion efficiency factor, found in Saccharophagus degradans (strain 2-40 / ATCC 43961 / DSM 17024).